The following is a 158-amino-acid chain: Low molecular weight phosphotyrosine protein phosphatase (158 aa).

Position 2 is an N-acetylalanine (Ala-2). Cys-13 functions as the Nucleophile in the catalytic mechanism. Arg-19 is an active-site residue. Asp-130 serves as the catalytic Proton donor. Phosphotyrosine occurs at positions 132 and 133.

It belongs to the low molecular weight phosphotyrosine protein phosphatase family. As to quaternary structure, interacts with EPHA2; dephosphorylates EPHA2. Interacts with EPHB1. In terms of assembly, interacts with the SH3 domain of SPTAN1. There is no interaction observed for isoforms 2 or 3. Phosphorylated by LCK. Phosphorylation at Tyr-132 increases its phosphatase activity. In terms of processing, not phosphorylated. Expressed in T-lymphocytes.

It is found in the cytoplasm. It catalyses the reaction O-phospho-L-tyrosyl-[protein] + H2O = L-tyrosyl-[protein] + phosphate. The enzyme catalyses a phosphate monoester + H2O = an alcohol + phosphate. With respect to regulation, inhibited by sulfhydryl reagents. Its function is as follows. Acts on tyrosine phosphorylated proteins, low-MW aryl phosphates and natural and synthetic acyl phosphates with differences in substrate specificity between isoform 1 and isoform 2. In terms of biological role, does not possess phosphatase activity. The protein is Low molecular weight phosphotyrosine protein phosphatase of Homo sapiens (Human).